The following is a 252-amino-acid chain: Diphthine synthase (252 aa).

S-adenosyl-L-methionine contacts are provided by residues Leu9, Asp85, Val88, 113 to 114 (SI), Leu165, Ala204, and His229.

This sequence belongs to the diphthine synthase family. In terms of assembly, homodimer.

It catalyses the reaction 2-[(3S)-amino-3-carboxypropyl]-L-histidyl-[translation elongation factor 2] + 3 S-adenosyl-L-methionine = diphthine-[translation elongation factor 2] + 3 S-adenosyl-L-homocysteine + 3 H(+). Its pathway is protein modification; peptidyl-diphthamide biosynthesis. In terms of biological role, S-adenosyl-L-methionine-dependent methyltransferase that catalyzes the trimethylation of the amino group of the modified target histidine residue in translation elongation factor 2 (EF-2), to form an intermediate called diphthine. The three successive methylation reactions represent the second step of diphthamide biosynthesis. The chain is Diphthine synthase from Methanocorpusculum labreanum (strain ATCC 43576 / DSM 4855 / Z).